The chain runs to 251 residues: Ribosomal RNA small subunit methyltransferase J (251 aa).

S-adenosyl-L-methionine contacts are provided by residues R100–D101, E116–R117, and D170.

It belongs to the methyltransferase superfamily. RsmJ family.

It is found in the cytoplasm. It catalyses the reaction guanosine(1516) in 16S rRNA + S-adenosyl-L-methionine = N(2)-methylguanosine(1516) in 16S rRNA + S-adenosyl-L-homocysteine + H(+). Specifically methylates the guanosine in position 1516 of 16S rRNA. This is Ribosomal RNA small subunit methyltransferase J from Actinobacillus pleuropneumoniae serotype 5b (strain L20).